The following is a 54-amino-acid chain: MSAAVWQDGEDIILKLYIQPKASRDKIVGLHGEELKIAITAPPVDGKANAHLTK.

This sequence belongs to the UPF0235 family.

The sequence is that of UPF0235 protein in proC 3'region from Vibrio alginolyticus.